A 234-amino-acid chain; its full sequence is tRNA (guanine-N(1)-)-methyltransferase (234 aa).

S-adenosyl-L-methionine contacts are provided by residues glycine 112 and 132–137; that span reads IGDFIL.

The protein belongs to the RNA methyltransferase TrmD family. In terms of assembly, homodimer.

It is found in the cytoplasm. It catalyses the reaction guanosine(37) in tRNA + S-adenosyl-L-methionine = N(1)-methylguanosine(37) in tRNA + S-adenosyl-L-homocysteine + H(+). Its function is as follows. Specifically methylates guanosine-37 in various tRNAs. The sequence is that of tRNA (guanine-N(1)-)-methyltransferase from Campylobacter jejuni subsp. jejuni serotype O:6 (strain 81116 / NCTC 11828).